The sequence spans 570 residues: Formate--tetrahydrofolate ligase (570 aa).

Residue 65–72 (TPYGEGKT) coordinates ATP.

Belongs to the formate--tetrahydrofolate ligase family.

The enzyme catalyses (6S)-5,6,7,8-tetrahydrofolate + formate + ATP = (6R)-10-formyltetrahydrofolate + ADP + phosphate. It functions in the pathway one-carbon metabolism; tetrahydrofolate interconversion. The chain is Formate--tetrahydrofolate ligase from Shewanella piezotolerans (strain WP3 / JCM 13877).